The chain runs to 192 residues: Ion-translocating oxidoreductase complex subunit A (192 aa).

6 consecutive transmembrane segments (helical) span residues 5 to 25, 39 to 59, 65 to 85, 102 to 122, 134 to 154, and 171 to 191; these read LLLL…FLGL, IGMS…SYLV, LPFD…AVVV, ALGI…VALL, AIFG…FSAM, and AIAM…TGLV.

This sequence belongs to the NqrDE/RnfAE family. In terms of assembly, the complex is composed of six subunits: RnfA, RnfB, RnfC, RnfD, RnfE and RnfG.

The protein localises to the cell inner membrane. Its function is as follows. Part of a membrane-bound complex that couples electron transfer with translocation of ions across the membrane. The sequence is that of Ion-translocating oxidoreductase complex subunit A from Shewanella pealeana (strain ATCC 700345 / ANG-SQ1).